Here is a 185-residue protein sequence, read N- to C-terminus: Ribosome-recycling factor (185 aa).

This sequence belongs to the RRF family.

It is found in the cytoplasm. Functionally, responsible for the release of ribosomes from messenger RNA at the termination of protein biosynthesis. May increase the efficiency of translation by recycling ribosomes from one round of translation to another. This chain is Ribosome-recycling factor, found in Pseudomonas entomophila (strain L48).